Here is a 563-residue protein sequence, read N- to C-terminus: Efflux pump FUS6 (563 aa).

Residues 1-30 (MPQPDKMAAVNNAMPQPAPEKSLSSDPQPE) are disordered. Transmembrane regions (helical) follow at residues 39–59 (WLIF…TSII), 75–95 (LYVW…PIFA), 105–125 (SLTL…GGAH), 138–158 (GIGG…MVSI), and 167–187 (IIGG…GAFA). N-linked (GlcNAc...) asparagine glycosylation occurs at N189. The next 3 helical transmembrane spans lie at 194-214 (WIFY…GLFL), 233-253 (WGGS…LSWG), and 261-281 (GWQT…FFAY). N-linked (GlcNAc...) asparagine glycosylation is present at N299. 6 consecutive transmembrane segments (helical) span residues 305 to 325 (LLVI…FLPV), 340 to 360 (VMLF…GITI), 368 to 388 (VWHF…TLLD), 401 to 421 (ILFG…ILAS), 433 to 453 (AWTF…AAVF), and 509 to 529 (KVVW…CFFV). A glycan (N-linked (GlcNAc...) asparagine) is linked at N553.

It belongs to the major facilitator superfamily. TCR/Tet family.

It is found in the membrane. Efflux pump; part of the gene cluster that mediates the biosynthesis of the mycotoxin fusarin C. Within the cluster, FUS1, FUS2, FUS8 and FUS9 are sufficient for fusarin production. The other FUS cluster members are not essential for fusarin C biosynthesis. This chain is Efflux pump FUS6, found in Gibberella moniliformis (strain M3125 / FGSC 7600) (Maize ear and stalk rot fungus).